The primary structure comprises 804 residues: Probable exo-1,4-beta-xylosidase xlnD (804 aa).

The N-terminal stretch at 1 to 26 (MAHSMSRPVAATAAALLALALPQALA) is a signal peptide. Residues asparagine 29, asparagine 124, asparagine 148, asparagine 242, and asparagine 251 are each glycosylated (N-linked (GlcNAc...) asparagine). Residue aspartate 315 is part of the active site. 10 N-linked (GlcNAc...) asparagine glycosylation sites follow: asparagine 357, asparagine 390, asparagine 413, asparagine 444, asparagine 455, asparagine 573, asparagine 576, asparagine 665, asparagine 696, and asparagine 718.

Belongs to the glycosyl hydrolase 3 family.

It is found in the secreted. It catalyses the reaction Hydrolysis of (1-&gt;4)-beta-D-xylans, to remove successive D-xylose residues from the non-reducing termini.. It functions in the pathway glycan degradation; xylan degradation. In terms of biological role, xylan 1,4-beta-xylosidase involved in the hydrolysis of xylan, a major structural heterogeneous polysaccharide found in plant biomass representing the second most abundant polysaccharide in the biosphere, after cellulose. The protein is Probable exo-1,4-beta-xylosidase xlnD (xlnD) of Aspergillus niger (strain ATCC MYA-4892 / CBS 513.88 / FGSC A1513).